A 576-amino-acid polypeptide reads, in one-letter code: Proline--tRNA ligase (576 aa).

This sequence belongs to the class-II aminoacyl-tRNA synthetase family. ProS type 1 subfamily. Homodimer.

It is found in the cytoplasm. It carries out the reaction tRNA(Pro) + L-proline + ATP = L-prolyl-tRNA(Pro) + AMP + diphosphate. Catalyzes the attachment of proline to tRNA(Pro) in a two-step reaction: proline is first activated by ATP to form Pro-AMP and then transferred to the acceptor end of tRNA(Pro). As ProRS can inadvertently accommodate and process non-cognate amino acids such as alanine and cysteine, to avoid such errors it has two additional distinct editing activities against alanine. One activity is designated as 'pretransfer' editing and involves the tRNA(Pro)-independent hydrolysis of activated Ala-AMP. The other activity is designated 'posttransfer' editing and involves deacylation of mischarged Ala-tRNA(Pro). The misacylated Cys-tRNA(Pro) is not edited by ProRS. The chain is Proline--tRNA ligase from Helicobacter pylori (strain J99 / ATCC 700824) (Campylobacter pylori J99).